We begin with the raw amino-acid sequence, 297 residues long: MSPMPALIEEGRAKVNLSLRVVGRRADGYHDLESVVAFADCADRLTLEPGGELKLATTGPLAAACGDTADNLVFKAAKLLAEAVPNLKLGAFALDKVLPVAAGIGGGSADAAAALRLLARLNNLSLDDPRLQKVALATGADVPVCLYSRACDMTGVGEQLLPLALPSMPCVMVNPRVPVATKDVFQALGLRNGELLVGATSVIGAPAWPEEGASIADWVEVLETVANDLEAPAMRIEPVIGEVLEALRDSAGVKLARMSGSGATCFAIYGAPAEAHAAAEKIRRDHPGWWVHAGTLS.

Lys14 is an active-site residue. Residue 99–109 (PVAAGIGGGSA) participates in ATP binding. Residue Asp141 is part of the active site.

It belongs to the GHMP kinase family. IspE subfamily.

The enzyme catalyses 4-CDP-2-C-methyl-D-erythritol + ATP = 4-CDP-2-C-methyl-D-erythritol 2-phosphate + ADP + H(+). It functions in the pathway isoprenoid biosynthesis; isopentenyl diphosphate biosynthesis via DXP pathway; isopentenyl diphosphate from 1-deoxy-D-xylulose 5-phosphate: step 3/6. Catalyzes the phosphorylation of the position 2 hydroxy group of 4-diphosphocytidyl-2C-methyl-D-erythritol. The chain is 4-diphosphocytidyl-2-C-methyl-D-erythritol kinase from Bradyrhizobium diazoefficiens (strain JCM 10833 / BCRC 13528 / IAM 13628 / NBRC 14792 / USDA 110).